We begin with the raw amino-acid sequence, 556 residues long: Formate--tetrahydrofolate ligase (556 aa).

Residue 65 to 72 coordinates ATP; it reads TPAGEGKS.

This sequence belongs to the formate--tetrahydrofolate ligase family.

The catalysed reaction is (6S)-5,6,7,8-tetrahydrofolate + formate + ATP = (6R)-10-formyltetrahydrofolate + ADP + phosphate. It functions in the pathway one-carbon metabolism; tetrahydrofolate interconversion. The chain is Formate--tetrahydrofolate ligase from Streptococcus thermophilus (strain ATCC BAA-250 / LMG 18311).